Here is a 199-residue protein sequence, read N- to C-terminus: Recombination protein RecR (199 aa).

The C4-type zinc-finger motif lies at 58 to 73 (CSVCYGLADSDPCHIC). The Toprim domain maps to 81–176 (DVVCVVEQGT…KITRIASGVP (96 aa)).

Belongs to the RecR family.

Functionally, may play a role in DNA repair. It seems to be involved in an RecBC-independent recombinational process of DNA repair. It may act with RecF and RecO. This Desulfatibacillum aliphaticivorans protein is Recombination protein RecR.